A 343-amino-acid polypeptide reads, in one-letter code: Dihydroorotase (343 aa).

Residues histidine 13 and histidine 15 each coordinate Zn(2+). Residues histidine 15 to arginine 17 and asparagine 41 each bind substrate. Zn(2+)-binding residues include lysine 99, histidine 136, and histidine 174. Lysine 99 is subject to N6-carboxylysine. Residue histidine 136 participates in substrate binding. Leucine 219 is a substrate binding site. Aspartate 247 contacts Zn(2+). The active site involves aspartate 247. Histidine 251 and alanine 263 together coordinate substrate.

This sequence belongs to the metallo-dependent hydrolases superfamily. DHOase family. Class II DHOase subfamily. As to quaternary structure, homodimer. Requires Zn(2+) as cofactor.

It catalyses the reaction (S)-dihydroorotate + H2O = N-carbamoyl-L-aspartate + H(+). The protein operates within pyrimidine metabolism; UMP biosynthesis via de novo pathway; (S)-dihydroorotate from bicarbonate: step 3/3. Functionally, catalyzes the reversible cyclization of carbamoyl aspartate to dihydroorotate. The chain is Dihydroorotase from Alkalilimnicola ehrlichii (strain ATCC BAA-1101 / DSM 17681 / MLHE-1).